The sequence spans 82 residues: RNA-binding protein Hfq (82 aa).

A Sm domain is found at 11–71; the sequence is DTFLNHVRKT…ISTIMPGAPI (61 aa).

This sequence belongs to the Hfq family. In terms of assembly, homohexamer.

In terms of biological role, RNA chaperone that binds small regulatory RNA (sRNAs) and mRNAs to facilitate mRNA translational regulation in response to envelope stress, environmental stress and changes in metabolite concentrations. Also binds with high specificity to tRNAs. The sequence is that of RNA-binding protein Hfq from Rhodopseudomonas palustris (strain TIE-1).